Reading from the N-terminus, the 482-residue chain is DNA polymerase II small subunit (482 aa).

It belongs to the DNA polymerase delta/II small subunit family. Heterodimer of a large subunit and a small subunit.

The enzyme catalyses DNA(n) + a 2'-deoxyribonucleoside 5'-triphosphate = DNA(n+1) + diphosphate. The catalysed reaction is Exonucleolytic cleavage in the 3'- to 5'-direction to yield nucleoside 5'-phosphates.. In terms of biological role, possesses two activities: a DNA synthesis (polymerase) and an exonucleolytic activity that degrades single-stranded DNA in the 3' to 5' direction. Has a template-primer preference which is characteristic of a replicative DNA polymerase. This Methanothermobacter thermautotrophicus (strain ATCC 29096 / DSM 1053 / JCM 10044 / NBRC 100330 / Delta H) (Methanobacterium thermoautotrophicum) protein is DNA polymerase II small subunit (polB).